The chain runs to 618 residues: 1-deoxy-D-xylulose-5-phosphate synthase (618 aa).

Thiamine diphosphate is bound by residues His76 and 117-119 (GHS). Asp148 contacts Mg(2+). Thiamine diphosphate-binding positions include 149 to 150 (GA), Asn177, Tyr284, and Glu366. Asn177 is a Mg(2+) binding site.

This sequence belongs to the transketolase family. DXPS subfamily. Homodimer. It depends on Mg(2+) as a cofactor. Requires thiamine diphosphate as cofactor.

The enzyme catalyses D-glyceraldehyde 3-phosphate + pyruvate + H(+) = 1-deoxy-D-xylulose 5-phosphate + CO2. It participates in metabolic intermediate biosynthesis; 1-deoxy-D-xylulose 5-phosphate biosynthesis; 1-deoxy-D-xylulose 5-phosphate from D-glyceraldehyde 3-phosphate and pyruvate: step 1/1. In terms of biological role, catalyzes the acyloin condensation reaction between C atoms 2 and 3 of pyruvate and glyceraldehyde 3-phosphate to yield 1-deoxy-D-xylulose-5-phosphate (DXP). This is 1-deoxy-D-xylulose-5-phosphate synthase from Dechloromonas aromatica (strain RCB).